We begin with the raw amino-acid sequence, 379 residues long: Queuine tRNA-ribosyltransferase (379 aa).

Aspartate 94 acts as the Proton acceptor in catalysis. Substrate is bound by residues 94–98 (DSGGF), aspartate 148, glutamine 191, and glycine 218. Residues 249-255 (GVGSPDA) form an RNA binding region. Aspartate 268 functions as the Nucleophile in the catalytic mechanism. The RNA binding; important for wobble base 34 recognition stretch occupies residues 273 to 277 (TRIAR). Zn(2+)-binding residues include cysteine 306, cysteine 308, cysteine 311, and histidine 337.

The protein belongs to the queuine tRNA-ribosyltransferase family. In terms of assembly, homodimer. Within each dimer, one monomer is responsible for RNA recognition and catalysis, while the other monomer binds to the replacement base PreQ1. It depends on Zn(2+) as a cofactor.

The enzyme catalyses 7-aminomethyl-7-carbaguanine + guanosine(34) in tRNA = 7-aminomethyl-7-carbaguanosine(34) in tRNA + guanine. It participates in tRNA modification; tRNA-queuosine biosynthesis. Functionally, catalyzes the base-exchange of a guanine (G) residue with the queuine precursor 7-aminomethyl-7-deazaguanine (PreQ1) at position 34 (anticodon wobble position) in tRNAs with GU(N) anticodons (tRNA-Asp, -Asn, -His and -Tyr). Catalysis occurs through a double-displacement mechanism. The nucleophile active site attacks the C1' of nucleotide 34 to detach the guanine base from the RNA, forming a covalent enzyme-RNA intermediate. The proton acceptor active site deprotonates the incoming PreQ1, allowing a nucleophilic attack on the C1' of the ribose to form the product. After dissociation, two additional enzymatic reactions on the tRNA convert PreQ1 to queuine (Q), resulting in the hypermodified nucleoside queuosine (7-(((4,5-cis-dihydroxy-2-cyclopenten-1-yl)amino)methyl)-7-deazaguanosine). In Macrococcus caseolyticus (strain JCSC5402) (Macrococcoides caseolyticum), this protein is Queuine tRNA-ribosyltransferase.